We begin with the raw amino-acid sequence, 203 residues long: MIIKENSDKQTQIYNFLIEFTKSKGYPPSVREICQAVSLKSTSTVHGHLKRLEKKGLIYRDPTKPRALEIVELSNEEKELIDIPIVGKVTAGMPILATENIEDMFQMPINYVKHNNDLFILKVTGDSMIEAGILDGDLAIIEQKNVATNGDIVVALIENEATIKRFFKENGFIRLQPENKNYEPIIVEDCSILGKLVGIYRAY.

A DNA-binding region (H-T-H motif) is located at residues 30-50; that stretch reads VREICQAVSLKSTSTVHGHLK. Catalysis depends on for autocatalytic cleavage activity residues S127 and K164.

Belongs to the peptidase S24 family. As to quaternary structure, homodimer.

It carries out the reaction Hydrolysis of Ala-|-Gly bond in repressor LexA.. Its function is as follows. Represses a number of genes involved in the response to DNA damage (SOS response), including recA and lexA. In the presence of single-stranded DNA, RecA interacts with LexA causing an autocatalytic cleavage which disrupts the DNA-binding part of LexA, leading to derepression of the SOS regulon and eventually DNA repair. The protein is LexA repressor of Clostridium perfringens (strain 13 / Type A).